Consider the following 161-residue polypeptide: MSSFVTNGYLPVTLEPHELTLDIKTNIRNAVYKAYLHREISGKMAKKIEIREDVELPLGEIVNNSVVINVPCVITYAYYHVGDIVRGTLNIEDESNVTIQCGDLICKLSRDSGTVSFSDSKYCFFRNGNAYDNGIEVSAVLMEAQQGTESSFVFLANIVDS.

The protein belongs to the poxviridae DNA-directed RNA polymerase 18 kDa subunit family. In terms of assembly, the DNA-dependent RNA polymerase used for intermediate and late genes expression consists of eight subunits Rpo30/OPG66, Rpo7/OPG90, Rpo22/OPG103, Rpo147/OPG105, Rpo18/OPG119, Rpo19/OPG131, Rpo132/OPG151 and Rpo35/OPG156. The same holoenzyme, with the addition of the transcription-specificity factor OPG109, is used for early gene expression. Post-translationally, apparently non-glycosylated.

The protein resides in the virion. The catalysed reaction is RNA(n) + a ribonucleoside 5'-triphosphate = RNA(n+1) + diphosphate. Functionally, part of the DNA-dependent RNA polymerase which catalyzes the transcription of viral DNA into RNA using the four ribonucleoside triphosphates as substrates. Responsible for the transcription of early, intermediate and late genes. DNA-dependent RNA polymerase associates with the early transcription factor (ETF), itself composed of OPG118 and OPG133, thereby allowing the early genes transcription. Late transcription, and probably also intermediate transcription, require newly synthesized RNA polymerase. In Cynomys gunnisoni (Gunnison's prairie dog), this protein is DNA-directed RNA polymerase 18 kDa subunit (OPG119).